The following is a 363-amino-acid chain: Large ribosomal subunit protein uL4 (363 aa).

This sequence belongs to the universal ribosomal protein uL4 family. Component of the large ribosomal subunit. Mature ribosomes consist of a small (40S) and a large (60S) subunit. The 40S subunit contains about 32 different proteins and 1 molecule of RNA (18S). The 60S subunit contains 45 different proteins and 3 molecules of RNA (25S, 5.8S and 5S).

The protein resides in the cytoplasm. Component of the ribosome, a large ribonucleoprotein complex responsible for the synthesis of proteins in the cell. The small ribosomal subunit (SSU) binds messenger RNAs (mRNAs) and translates the encoded message by selecting cognate aminoacyl-transfer RNA (tRNA) molecules. The large subunit (LSU) contains the ribosomal catalytic site termed the peptidyl transferase center (PTC), which catalyzes the formation of peptide bonds, thereby polymerizing the amino acids delivered by tRNAs into a polypeptide chain. The nascent polypeptides leave the ribosome through a tunnel in the LSU and interact with protein factors that function in enzymatic processing, targeting, and the membrane insertion of nascent chains at the exit of the ribosomal tunnel. In Candida albicans (strain SC5314 / ATCC MYA-2876) (Yeast), this protein is Large ribosomal subunit protein uL4.